We begin with the raw amino-acid sequence, 249 residues long: Vitamin B12 import ATP-binding protein BtuD (249 aa).

Positions Met5–Asn233 constitute an ABC transporter domain. ATP is bound at residue Gly33–Ser40.

Belongs to the ABC transporter superfamily. Vitamin B12 importer (TC 3.A.1.13.1) family. As to quaternary structure, the complex is composed of two ATP-binding proteins (BtuD), two transmembrane proteins (BtuC) and a solute-binding protein (BtuF).

Its subcellular location is the cell inner membrane. It catalyses the reaction an R-cob(III)alamin(out) + ATP + H2O = an R-cob(III)alamin(in) + ADP + phosphate + H(+). In terms of biological role, part of the ABC transporter complex BtuCDF involved in vitamin B12 import. Responsible for energy coupling to the transport system. This Citrobacter koseri (strain ATCC BAA-895 / CDC 4225-83 / SGSC4696) protein is Vitamin B12 import ATP-binding protein BtuD.